The chain runs to 401 residues: Elongation factor Tu 2 (401 aa).

The tr-type G domain maps to 10–209 (KPHVNVGTIG…AVDEYIPTPV (200 aa)). Positions 19–26 (GHVDHGKT) are G1. Position 19–26 (19–26 (GHVDHGKT)) interacts with GTP. Thr-26 lines the Mg(2+) pocket. Residues 60–64 (GITIA) form a G2 region. A G3 region spans residues 81 to 84 (DCPG). GTP contacts are provided by residues 81–85 (DCPGH) and 136–139 (NKVD). The segment at 136-139 (NKVD) is G4. Residues 174–176 (SAL) are G5.

Belongs to the TRAFAC class translation factor GTPase superfamily. Classic translation factor GTPase family. EF-Tu/EF-1A subfamily. As to quaternary structure, monomer.

The protein localises to the cytoplasm. The enzyme catalyses GTP + H2O = GDP + phosphate + H(+). GTP hydrolase that promotes the GTP-dependent binding of aminoacyl-tRNA to the A-site of ribosomes during protein biosynthesis. This is Elongation factor Tu 2 from Roseiflexus castenholzii (strain DSM 13941 / HLO8).